The chain runs to 283 residues: S-methyl-5'-thioadenosine phosphorylase (283 aa).

Thr-18 serves as a coordination point for phosphate. Residue Lys-51 is modified to N6-acetyllysine. Phosphate is bound by residues 60-61 (RH) and 93-94 (TA). Residue Met-196 participates in substrate binding. Residue Thr-197 coordinates phosphate. 220–222 (DYD) lines the substrate pocket.

Belongs to the PNP/MTAP phosphorylase family. MTAP subfamily. Homotrimer.

Its subcellular location is the cytoplasm. It localises to the nucleus. It catalyses the reaction S-methyl-5'-thioadenosine + phosphate = 5-(methylsulfanyl)-alpha-D-ribose 1-phosphate + adenine. It functions in the pathway amino-acid biosynthesis; L-methionine biosynthesis via salvage pathway; S-methyl-5-thio-alpha-D-ribose 1-phosphate from S-methyl-5'-thioadenosine (phosphorylase route): step 1/1. Its function is as follows. Catalyzes the reversible phosphorylation of S-methyl-5'-thioadenosine (MTA) to adenine and 5-methylthioribose-1-phosphate. Involved in the breakdown of MTA, a major by-product of polyamine biosynthesis. Responsible for the first step in the methionine salvage pathway after MTA has been generated from S-adenosylmethionine. Has broad substrate specificity with 6-aminopurine nucleosides as preferred substrates. The polypeptide is S-methyl-5'-thioadenosine phosphorylase (Mtap) (Mus musculus (Mouse)).